The chain runs to 734 residues: Fc receptor-like protein 3 (734 aa).

The N-terminal stretch at 1–17 (MLLWLLLLILTPGREQS) is a signal peptide. Topologically, residues 18–573 (GVAPKAVLLL…GTSRNRTGLT (556 aa)) are extracellular. Ig-like C2-type domains lie at 21-98 (PKAV…VEFS), 99-182 (PDWL…KPLN), 192-270 (PVLR…HSIK), 284-369 (PVSN…PILS), 383-470 (PVLT…LRVT), and 476-563 (PVLT…LNVT). Disulfide bonds link Cys44–Cys82, Cys120–Cys163, Cys211–Cys260, Cys309–Cys358, Cys404–Cys451, and Cys497–Cys544. Asn561 is a glycosylation site (N-linked (GlcNAc...) asparagine). The helical transmembrane segment at 574-594 (AAGITGLVLSILVLAAAAALL) threads the bilayer. Residues 595 to 734 (HYARARRKPG…VPRVLLASDH (140 aa)) lie on the Cytoplasmic side of the membrane. Positions 603-655 (PGGLSATGTSSHSPSECQEPSSSRPSRIDPQEPTHSKPLAPMELEPMYSNVNP) are disordered. A compositionally biased stretch (polar residues) spans 608–627 (ATGTSSHSPSECQEPSSSRP). Basic and acidic residues predominate over residues 628–637 (SRIDPQEPTH). 4 short sequence motifs (ITIM motif) span residues 648 to 653 (PMYSNV), 660 to 665 (PIYSQI), 690 to 695 (VLYSEL), and 720 to 725 (ENYENV). Residues Tyr650, Tyr662, Tyr692, and Tyr722 each carry the phosphotyrosine modification. The tract at residues 695–734 (LKKTHPDDSAGEASSRGRAHEEDDEENYENVPRVLLASDH) is disordered.

In terms of assembly, interacts (via phosphorylated ITIM motifs) with phosphatases INPP5D, PTPN6 and PTPN11. Interacts (via ITIM motifs) SYK and ZAP70. Interacts with IZUMO1R/JUNO. Interacts (via extracellular domain) with IZUMO1; the interaction replaces IZUMO1R/JUNO as IZUMO1 receptor after adhesion between sperm and egg. Phosphorylated on cytoplasmic tyrosines; required for interaction with protein tyrosine phosphatases and protein tyrosine kinases. Primarily expressed in secondary lymphoid tissues by mature subsets of B-cells. Low expression on transitional B cells which increases to higher surface expression on mature and memory B-cells with innate-like features (at protein level). Expressed a low levels in naive and germinal center B-cells but also expressed in NK cells (at protein level). Expressed in unfertilized oocytes (at protein level). Expressed in a population of thymically derived naturally occurring regulatory T-cells that exhibits a memory phenotype, specialized in suppressing immune response to self-antigens. Detected in spleen, lymph node, peripheral blood lymphocytes, thymus, bone marrow, kidney, salivary gland, adrenal gland and uterus.

It is found in the cell membrane. It localises to the cell projection. The protein resides in the microvillus membrane. In terms of biological role, promotes TLR9-induced B-cell proliferation, activation and survival but inhibits antibody production and suppresses plasma cell differentiation. Enhances activation of NF-kappa-B and MAPK signaling pathways in TLR9 stimulated B-cells. Has inhibitory potentional on B-cell receptor (BCR)-mediated signaling, possibly through association with SH2 domain-containing phosphatases. Inhibits cell tyrosine phosphorylation, calcium mobilization and activation-induced cell death induced through BCR signaling. Regulatory T-cells expressing FCRL3 exhibit a memory phenotype, are relatively nonresponsive to antigenic stimulation in presence of IL2 and have reduced capacity to suppress the proliferation of effector T-cells. Acts as a human-specific epitope on the cell surface of oocytes (oolemma) and plays a role during sperm-egg adhesion and fusion. Interacts with the IZUMO1-IZUMO1R/JUNO sperm-egg complex and replaces IZUMO1R/JUNO as IZUMO1 receptor during fertilization, thereby permitting species-specific gamete fusion. The sequence is that of Fc receptor-like protein 3 from Homo sapiens (Human).